A 263-amino-acid chain; its full sequence is Rano class II histocompatibility antigen, B-1 beta chain (263 aa).

Residues 1 to 27 (MALQTPSFLLPAAVVVLMVLSSPGTEG) form the signal peptide. The tract at residues 28 to 120 (RDSPRDFVYQ…SEVRTSLRRL (93 aa)) is beta-1. Residues 28 to 224 (RDSPRDFVYQ…RAQSESAQSK (197 aa)) lie on the Extracellular side of the membrane. Intrachain disulfides connect C42-C104 and C143-C199. An N-linked (GlcNAc...) asparagine glycan is attached at N46. A beta-2 region spans residues 121–214 (EQPNVAISLS…SLESPVTVEW (94 aa)). The region spanning 123-211 (PNVAISLSRT…DHPSLESPVT (89 aa)) is the Ig-like C1-type domain. Residues 215 to 224 (RAQSESAQSK) form a connecting peptide region. The helical transmembrane segment at 225-245 (MLSGIGGFVLGVIFLGLGLFI) threads the bilayer. Topologically, residues 246–263 (RHKRQKGPRGPPPAGLLQ) are cytoplasmic. A Glycyl lysine isopeptide (Lys-Gly) (interchain with G-Cter in ubiquitin) cross-link involves residue K251.

The protein belongs to the MHC class II family.

It is found in the membrane. Its function is as follows. Involved in the presentation of foreign antigens to the immune system. The protein is Rano class II histocompatibility antigen, B-1 beta chain (RT1-Bb) of Rattus norvegicus (Rat).